The following is a 416-amino-acid chain: Serine hydroxymethyltransferase (416 aa).

Residues leucine 117 and 121–123 each bind (6S)-5,6,7,8-tetrahydrofolate; that span reads GHL. Lysine 226 carries the post-translational modification N6-(pyridoxal phosphate)lysine.

This sequence belongs to the SHMT family. As to quaternary structure, homodimer. Pyridoxal 5'-phosphate is required as a cofactor.

It localises to the cytoplasm. It catalyses the reaction (6R)-5,10-methylene-5,6,7,8-tetrahydrofolate + glycine + H2O = (6S)-5,6,7,8-tetrahydrofolate + L-serine. It functions in the pathway one-carbon metabolism; tetrahydrofolate interconversion. Its pathway is amino-acid biosynthesis; glycine biosynthesis; glycine from L-serine: step 1/1. Functionally, catalyzes the reversible interconversion of serine and glycine with tetrahydrofolate (THF) serving as the one-carbon carrier. This reaction serves as the major source of one-carbon groups required for the biosynthesis of purines, thymidylate, methionine, and other important biomolecules. Also exhibits THF-independent aldolase activity toward beta-hydroxyamino acids, producing glycine and aldehydes, via a retro-aldol mechanism. This Leptospira biflexa serovar Patoc (strain Patoc 1 / Ames) protein is Serine hydroxymethyltransferase.